Reading from the N-terminus, the 325-residue chain is Heat-inducible transcription repressor HrcA (325 aa).

This sequence belongs to the HrcA family.

Functionally, negative regulator of class I heat shock genes (grpE-dnaK-dnaJ and groELS operons). Prevents heat-shock induction of these operons. The protein is Heat-inducible transcription repressor HrcA of Staphylococcus aureus (strain MRSA252).